We begin with the raw amino-acid sequence, 179 residues long: Replication restart protein DnaT (179 aa).

The interval 156–179 is disordered; that stretch reads GGLPKRDVNTVSEPDSQIPPGFRG.

This sequence belongs to the DnaT family. In terms of assembly, homooligomerizes. Interacts with PriB. Component of the replication restart primosome. Primosome assembly occurs via a 'hand-off' mechanism. PriA binds to replication forks, subsequently PriB then DnaT bind; DnaT then displaces ssDNA to generate the helicase loading substrate.

Involved in the restart of stalled replication forks, which reloads the replicative helicase on sites other than the origin of replication. Can function in multiple replication restart pathways. Displaces ssDNA from a PriB-ssDNA complex. Probably forms a spiral filament on ssDNA. This chain is Replication restart protein DnaT, found in Escherichia coli O7:K1 (strain IAI39 / ExPEC).